We begin with the raw amino-acid sequence, 218 residues long: Sodium channel regulatory subunit beta-1 (218 aa).

The first 18 residues, 1–18 (MGTLLALVVGAALVSSAW), serve as a signal peptide directing secretion. Residues 19-157 (GGCVEVDSET…DKANRDMASI (139 aa)) are Extracellular-facing. Disulfide bonds link cysteine 21–cysteine 43 and cysteine 40–cysteine 121. One can recognise an Ig-like C2-type domain in the interval 22 to 150 (VEVDSETEAV…KIHIEVVDKA (129 aa)). Asparagine 93, asparagine 110, asparagine 114, and asparagine 135 each carry an N-linked (GlcNAc...) asparagine glycan. Residues 158–179 (VSEIMMYVLIVVLTIWLVAEMV) traverse the membrane as a helical segment. Topologically, residues 180 to 218 (YCYKKIAAATEAAAQENASEYLAITSESKENCTGVQVAE) are cytoplasmic.

It belongs to the sodium channel auxiliary subunit SCN1B (TC 8.A.17) family. As to quaternary structure, a voltage-gated sodium (Nav) channel consists of an ion-conducting pore-forming alpha subunit functional on its own that is regulated by one or more beta subunits. Interacts with SCN1A; regulatory subunit of SCN1A/Nav1.1. Interacts with SCN3A; regulatory subunit of SCN3A/Nav1.3. Interacts with SCN4A; regulatory subunit of SCN4A/Nav1.4. Interacts with SCN5A; regulatory subunit of SCN5A/Nav1.5. Interacts with SCN8A; regulatory subunit of SCN8A/Nav1.6. Interacts with SCN9A; regulatory subunit of SCN9A/Nav1.7. Interacts with SCN10A; regulatory subunit of SCN10A/Nav1.8. Interacts with NFASC. Interacts with TMEM65.

The protein localises to the cell membrane. It localises to the perikaryon. The protein resides in the cell projection. Its subcellular location is the axon. Regulatory subunit of multiple voltage-gated sodium (Nav) channels directly mediating the depolarization of excitable membranes. Navs, also called VGSCs (voltage-gated sodium channels) or VDSCs (voltage-dependent sodium channels), operate by switching between closed and open conformations depending on the voltage difference across the membrane. In the open conformation they allow Na(+) ions to selectively pass through the pore, along their electrochemical gradient. The influx of Na+ ions provokes membrane depolarization, initiating the propagation of electrical signals throughout cells and tissues. The accessory beta subunits participate in localization and functional modulation of the Nav channels. Modulates the activity of SCN1A/Nav1.1, SCN2A/Nav1.2, SCN3A/Nav1.3, SCN4A/Nav1.4, SCN5A/Nav1.5, SCN8A/Nav1.6, SCN9A/Nav1.7 and SCN10A/Nav1.8. This chain is Sodium channel regulatory subunit beta-1, found in Canis lupus familiaris (Dog).